A 464-amino-acid polypeptide reads, in one-letter code: Sushi repeat-containing protein SRPX (464 aa).

Positions 1–30 (MGSPAHRPALLLLLPPLLLLLLLRVPPSRS) are cleaved as a signal peptide. A glycan (O-linked (Xyl...) (chondroitin sulfate) serine) is linked at Ser34. 5 disulfides stabilise this stretch: Cys57–Cys85, Cys69–Cys103, Cys89–Cys115, Cys120–Cys161, and Cys147–Cys174. Sushi domains follow at residues 57 to 117 (CSPI…ICKQ) and 118 to 176 (KRCP…SCVD). Positions 177–259 (MEPPRIKCPS…TCKFRVKVRV (83 aa)) constitute an HYR domain. A Sushi 3 domain is found at 260–319 (KRCGKLNAPENGYMKCSSDGDNYGATCEFSCIGGYELQGSPARVCQSNLAWSGTEPTCAA). Cystine bridges form between Cys262–Cys304 and Cys290–Cys317.

Detected in fibroblasts (at protein level). Retina and heart; less in placenta, pancreas, lung, liver, skeletal muscle, kidney and brain.

It is found in the cell surface. Functionally, may be involved in phagocytosis during disk shedding, cell adhesion to cells other than the pigment epithelium or signal transduction. This is Sushi repeat-containing protein SRPX (SRPX) from Homo sapiens (Human).